The following is a 343-amino-acid chain: Sodium/bile acid cotransporter 7 (343 aa).

The Cytoplasmic segment spans residues 1–10; the sequence is MGLLERLRKE. A helical transmembrane segment spans residues 11–31; sequence WFIVGIILVIAAAKLEPTIGG. At 32-37 the chain is on the extracellular side; that stretch reads KGGPLK. Residues 38 to 58 form a helical membrane-spanning segment; that stretch reads PEITITYIAVSAIFFNSGLSL. Topologically, residues 59–71 are cytoplasmic; that stretch reads KTEELTNALMHVK. The helical transmembrane segment at 72–92 threads the bilayer; sequence LHLFVQLFTLVFFPTAIWVFL. The Extracellular portion of the chain corresponds to 93 to 116; the sequence is QVLSLTPINEWLLKGLQTVSCMPP. A helical transmembrane segment spans residues 117–137; the sequence is PVSSAVILTKAVGGNEAAAIF. A topological domain (cytoplasmic) is located at residue N138. The helical transmembrane segment at 139-159 threads the bilayer; sequence SAFGSFLGIVVTPLLLLLFLG. The Extracellular segment spans residues 160 to 163; sequence SSSS. A helical transmembrane segment spans residues 164–184; sequence VPFTSIFSQLFMTVVVPLIIG. The Cytoplasmic portion of the chain corresponds to 185–201; that stretch reads QIVRRYIKDWLERKKPP. Residues 202 to 222 traverse the membrane as a helical segment; sequence FGAISSCVLLMIIYTTFCDTF. At 223–234 the chain is on the extracellular side; sequence SNPNIDLDTFSL. The helical transmembrane segment at 235–255 threads the bilayer; sequence VIIVFIIFFIQLAFMLLTFLF. Over 256 to 270 the chain is Cytoplasmic; the sequence is STSKNTGFTPADTVA. The helical transmembrane segment at 271–291 threads the bilayer; sequence IVFCSTHKSLTLGIPMLKIVF. Residues 292-298 lie on the Extracellular side of the membrane; it reads AGYEHLS. Residues 299–319 traverse the membrane as a helical segment; the sequence is LISVPLLIYHPAQILLGSVLV. The Cytoplasmic segment spans residues 320–343; that stretch reads PTIKSWMLSRQKALKLTRQPKVPL.

This sequence belongs to the bile acid:sodium symporter (BASS) (TC 2.A.28) family.

Its subcellular location is the cell membrane. The protein resides in the endoplasmic reticulum membrane. It is found in the golgi apparatus membrane. Involved in teeth and skeletal development. Has an essential role in the biosynthesis and trafficking of glycosaminoglycans and glycoproteins to produce a proper functioning extracellular matrix. Required for extracellular matrix mineralization. Also involved in the regulation of cellular calcium homeostasis. Does not show transport activity towards bile acids or steroid sulfates. This chain is Sodium/bile acid cotransporter 7 (slc10a7), found in Xenopus tropicalis (Western clawed frog).